A 945-amino-acid polypeptide reads, in one-letter code: Sensor kinase CckA (945 aa).

Helical transmembrane passes span 111–131 and 139–159; these read ALRL…YFLF and FALV…FGAA. 3 consecutive PAS domains span residues 171 to 212, 313 to 341, and 432 to 505; these read HQDL…TDAD, LDHA…EWLG, and AEVR…FAGQ. Positions 574 to 797 constitute a Histidine kinase domain; it reads GIAHDFNNVL…TFKIFLPRLI (224 aa). H577 is modified (phosphohistidine; by autocatalysis). The region spanning 825 to 941 is the Response regulatory domain; it reads TVLLVEDEDA…QLATTVKEML (117 aa). D876 is modified (4-aspartylphosphate).

The protein localises to the cell inner membrane. It catalyses the reaction ATP + protein L-histidine = ADP + protein N-phospho-L-histidine.. Component of a regulatory phosphorelay system that controls B.abortus cell growth, division, and intracellular survival inside mammalian host cells. This signaling pathway is composed of CckA, ChpT, CtrA and CpdR. CckA autophosphorylates in the presence of ATP on a conserved His residue and transfers a phosphoryl group to a conserved Asp residue on its C-terminal receiver domain. CckA-P transfers phosphoryl groups to the ChpT phosphotransferase. The sequence is that of Sensor kinase CckA from Brucella abortus (strain 2308).